The sequence spans 253 residues: uncharacterized protein (253 aa).

Residues glycine 45, 66–67 (DA), 94–95 (AE), and arginine 110 contribute to the S-adenosyl-L-methionine site.

This sequence belongs to the methyltransferase superfamily.

This is an uncharacterized protein from Bacillus subtilis (strain 168).